A 563-amino-acid polypeptide reads, in one-letter code: Eukaryotic translation initiation factor 3 subunit D (563 aa).

Residues 95 to 136 (PGYMRNRNRFNQRGGYRRDNRGGRFQGQGGNMGMQNLSRGRD) form a disordered region. Residues 294–308 (EFDLLTVGETANDLN) are RNA gate. Residues 528–563 (IPNSTFETDEEDDDDDEDDVENDDGDDEKDEGDGED) are disordered. Residues 534-563 (ETDEEDDDDDEDDVENDDGDDEKDEGDGED) are compositionally biased toward acidic residues.

It belongs to the eIF-3 subunit D family. Component of the eukaryotic translation initiation factor 3 (eIF-3) complex.

Its subcellular location is the cytoplasm. Functionally, mRNA cap-binding component of the eukaryotic translation initiation factor 3 (eIF-3) complex, which is involved in protein synthesis of a specialized repertoire of mRNAs and, together with other initiation factors, stimulates binding of mRNA and methionyl-tRNAi to the 40S ribosome. The eIF-3 complex specifically targets and initiates translation of a subset of mRNAs involved in cell proliferation. In the eIF-3 complex, eif3d specifically recognizes and binds the 7-methylguanosine cap of a subset of mRNAs. The sequence is that of Eukaryotic translation initiation factor 3 subunit D from Nematostella vectensis (Starlet sea anemone).